The sequence spans 295 residues: Ribosomal protein L11 methyltransferase (295 aa).

S-adenosyl-L-methionine contacts are provided by Thr-150, Gly-171, Asp-193, and Asn-232.

It belongs to the methyltransferase superfamily. PrmA family.

It is found in the cytoplasm. The catalysed reaction is L-lysyl-[protein] + 3 S-adenosyl-L-methionine = N(6),N(6),N(6)-trimethyl-L-lysyl-[protein] + 3 S-adenosyl-L-homocysteine + 3 H(+). Its function is as follows. Methylates ribosomal protein L11. In Neisseria meningitidis serogroup B (strain ATCC BAA-335 / MC58), this protein is Ribosomal protein L11 methyltransferase.